A 216-amino-acid chain; its full sequence is Ribosomal RNA small subunit methyltransferase G (216 aa).

S-adenosyl-L-methionine is bound by residues glycine 83, methionine 88, 134–135 (VE), and arginine 149.

It belongs to the methyltransferase superfamily. RNA methyltransferase RsmG family.

The protein localises to the cytoplasm. It catalyses the reaction guanosine(527) in 16S rRNA + S-adenosyl-L-methionine = N(7)-methylguanosine(527) in 16S rRNA + S-adenosyl-L-homocysteine. In terms of biological role, specifically methylates the N7 position of guanine in position 527 of 16S rRNA. This Pseudomonas entomophila (strain L48) protein is Ribosomal RNA small subunit methyltransferase G.